Consider the following 522-residue polypeptide: Putative aldehyde dehydrogenase-like protein C21C3 (522 aa).

Glu-239 functions as the Proton acceptor in the catalytic mechanism. Cys-273 (nucleophile) is an active-site residue.

The protein belongs to the aldehyde dehydrogenase family.

It localises to the cytoplasm. The protein resides in the nucleus. The polypeptide is Putative aldehyde dehydrogenase-like protein C21C3 (Schizosaccharomyces pombe (strain 972 / ATCC 24843) (Fission yeast)).